The chain runs to 360 residues: 3-dehydroquinate synthase (360 aa).

NAD(+)-binding positions include 71 to 76 (DGEQYK), 105 to 109 (GVIGD), 129 to 130 (TT), Lys-142, Lys-151, and 169 to 172 (CLDT). Zn(2+) contacts are provided by Glu-184, His-247, and His-264.

This sequence belongs to the sugar phosphate cyclases superfamily. Dehydroquinate synthase family. Co(2+) is required as a cofactor. Requires Zn(2+) as cofactor. NAD(+) serves as cofactor.

The protein resides in the cytoplasm. The catalysed reaction is 7-phospho-2-dehydro-3-deoxy-D-arabino-heptonate = 3-dehydroquinate + phosphate. The protein operates within metabolic intermediate biosynthesis; chorismate biosynthesis; chorismate from D-erythrose 4-phosphate and phosphoenolpyruvate: step 2/7. In terms of biological role, catalyzes the conversion of 3-deoxy-D-arabino-heptulosonate 7-phosphate (DAHP) to dehydroquinate (DHQ). This Erwinia tasmaniensis (strain DSM 17950 / CFBP 7177 / CIP 109463 / NCPPB 4357 / Et1/99) protein is 3-dehydroquinate synthase.